Here is a 316-residue protein sequence, read N- to C-terminus: ATP synthase gamma chain (316 aa).

The protein belongs to the ATPase gamma chain family. In terms of assembly, F-type ATPases have 2 components, CF(1) - the catalytic core - and CF(0) - the membrane proton channel. CF(1) has five subunits: alpha(3), beta(3), gamma(1), delta(1), epsilon(1). CF(0) has three main subunits: a, b and c.

Its subcellular location is the cellular thylakoid membrane. Its function is as follows. Produces ATP from ADP in the presence of a proton gradient across the membrane. The gamma chain is believed to be important in regulating ATPase activity and the flow of protons through the CF(0) complex. The sequence is that of ATP synthase gamma chain from Prochlorococcus marinus (strain MIT 9211).